The sequence spans 500 residues: E3 ubiquitin-protein ligase TRIM69 (500 aa).

The interval 1–152 (MEVSTNPSSN…SVGQSKEFLQ (152 aa)) is necessary for nuclear localization. Residues 41–82 (CPLCNDWFRDPLMLSCGHNFCEACIQDFWRLQAKETFCPECK) form an RING-type zinc finger. The stretch at 161–255 (TEELAIQQGQ…QCLLAKDMLV (95 aa)) forms a coiled coil. The region spanning 305-500 (PIQYMVWREM…KEPLHILHPQ (196 aa)) is the B30.2/SPRY domain. Serine 341 is subject to Phosphoserine.

Belongs to the TRIM/RBCC family. In terms of assembly, homo-multimer; required for antiviral activity. Interacts with PML. Phosphorylated. Phosphorylation is necessary for nuclear localization.

It is found in the cytoplasm. The protein resides in the nucleus. The protein localises to the nucleus speckle. Its subcellular location is the cytoskeleton. It localises to the microtubule organizing center. It is found in the centrosome. It carries out the reaction S-ubiquitinyl-[E2 ubiquitin-conjugating enzyme]-L-cysteine + [acceptor protein]-L-lysine = [E2 ubiquitin-conjugating enzyme]-L-cysteine + N(6)-ubiquitinyl-[acceptor protein]-L-lysine.. It functions in the pathway protein modification; protein ubiquitination. Functionally, E3 ubiquitin ligase that plays an important role in antiviral immunity by restricting different viral infections including dengue virus or vesicular stomatitis indiana virus. Ubiquitinates viral proteins such as dengue virus NS3 thereby limiting infection. In addition, acts as a key mediator of type I interferon induced microtubule stabilization by directly associating to microtubules independently of its E3 ligase activity. Also plays a role in cataract formation together with TP53. Mechanistically, inhibits UVB-induced cell apoptosis and reactive oxygen species (ROS) production by inducing TP53 ubiquitination. Regulates centrosome dynamics and mitotic progression by ubiquitinating STK3/MST2; leading to its redistribution to the perinuclear cytoskeleton and subsequent phosphorylation by PLK1. This is E3 ubiquitin-protein ligase TRIM69 (TRIM69) from Homo sapiens (Human).